A 105-amino-acid chain; its full sequence is Replication initiation control protein YabA (105 aa).

Positions 79, 81, 95, and 98 each coordinate Zn(2+).

It belongs to the YabA family. Homotetramer. Interacts with both DnaA and DnaN, acting as a bridge between these two proteins. The cofactor is Zn(2+).

Its subcellular location is the cytoplasm. It is found in the nucleoid. In terms of biological role, involved in control of chromosome replication initiation. Inhibits the cooperative binding of DnaA to the oriC region, thus negatively regulating initiation of chromosome replication. Inhibits the ability of DnaA-ATP to form a helix on DNA; does not disassemble preformed DnaA-DNA helices. Decreases the residence time of DnaA on the chromosome at its binding sites (oriC, replication forks and promoter-binding sites). Tethers DnaA to the replication machinery via the DNA polymerase beta sliding clamp subunit (dnaN). Associates with oriC and other DnaA targets on the chromosome in a DnaA-dependent manner. This is Replication initiation control protein YabA from Streptococcus sanguinis (strain SK36).